A 138-amino-acid polypeptide reads, in one-letter code: Small ribosomal subunit protein uS11c (138 aa).

It belongs to the universal ribosomal protein uS11 family. Part of the 30S ribosomal subunit.

It is found in the plastid. The protein localises to the chloroplast. This Phalaenopsis aphrodite subsp. formosana (Moth orchid) protein is Small ribosomal subunit protein uS11c.